Consider the following 213-residue polypeptide: Orotate phosphoribosyltransferase (213 aa).

Lys-26 serves as a coordination point for 5-phospho-alpha-D-ribose 1-diphosphate. 34 to 35 (FF) serves as a coordination point for orotate. Residues 72–73 (YK), Arg-99, Lys-100, Lys-103, His-105, and 124–132 (DDVITAGTA) contribute to the 5-phospho-alpha-D-ribose 1-diphosphate site. Thr-128 and Arg-156 together coordinate orotate.

It belongs to the purine/pyrimidine phosphoribosyltransferase family. PyrE subfamily. As to quaternary structure, homodimer. The cofactor is Mg(2+).

The enzyme catalyses orotidine 5'-phosphate + diphosphate = orotate + 5-phospho-alpha-D-ribose 1-diphosphate. The protein operates within pyrimidine metabolism; UMP biosynthesis via de novo pathway; UMP from orotate: step 1/2. Catalyzes the transfer of a ribosyl phosphate group from 5-phosphoribose 1-diphosphate to orotate, leading to the formation of orotidine monophosphate (OMP). The chain is Orotate phosphoribosyltransferase from Pseudomonas paraeruginosa (strain DSM 24068 / PA7) (Pseudomonas aeruginosa (strain PA7)).